The primary structure comprises 662 residues: p-hydroxybenzoic acid efflux pump subunit AaeB (662 aa).

Transmembrane regions (helical) follow at residues 22–42, 52–72, 76–96, 102–122, 129–149, 161–181, 378–398, 415–435, 439–459, 467–487, and 491–511; these read FAFKLSFAIVLSLFLGFHLQL, AAIVAAGPAFAAGGEPFSGAI, GMLRVVGTFIGCIGALIIIIA, VVMLMLCCIWAGLCTWVSSLV, VFGLAGYTTLIIIVSTQGTPL, EIVLGIVCAILADLLFSPRSI, LFWLSTGWTSGSVCMVMIAVV, FLFGTIYALPLGALMFMFIMP, QSMLLLCLSLGAMAFFLGLEV, LGALASTINILVLDNPMTFHI, and LDSAIGQIIGCFLALMVILLI.

Belongs to the aromatic acid exporter ArAE (TC 2.A.85) family.

It localises to the cell inner membrane. Functionally, forms an efflux pump with AaeA. Could function as a metabolic relief valve, allowing to eliminate certain compounds when they accumulate to high levels in the cell. This chain is p-hydroxybenzoic acid efflux pump subunit AaeB, found in Pectobacterium carotovorum subsp. carotovorum (strain PC1).